A 539-amino-acid polypeptide reads, in one-letter code: Glutathione synthetase, chloroplastic (539 aa).

The N-terminal 61 residues, 1–61 (MGSGCSSLSY…SPLRCGRSFK (61 aa)), are a transit peptide targeting the chloroplast. R193 provides a ligand contact to substrate. Residue E209 coordinates ATP. Mg(2+)-binding residues include E209 and N211. Substrate-binding positions include 213-216 (ISCS), 281-283 (ERN), Q287, and 335-338 (RSGY). ATP is bound by residues K374, 428–437 (KPQREGGGNN), Y439, 464–467 (MQRI), and E490. Residue E432 participates in Mg(2+) binding. A substrate-binding site is contributed by R515. Residues K517 and E523 each coordinate ATP. 526-527 (VA) serves as a coordination point for substrate.

The protein belongs to the eukaryotic GSH synthase family. As to quaternary structure, homodimer. Mg(2+) serves as cofactor.

The protein resides in the plastid. It is found in the chloroplast. It catalyses the reaction gamma-L-glutamyl-L-cysteine + glycine + ATP = glutathione + ADP + phosphate + H(+). It participates in sulfur metabolism; glutathione biosynthesis; glutathione from L-cysteine and L-glutamate: step 2/2. The polypeptide is Glutathione synthetase, chloroplastic (GSH2) (Arabidopsis thaliana (Mouse-ear cress)).